The chain runs to 58 residues: Large ribosomal subunit protein bL32 (58 aa).

Belongs to the bacterial ribosomal protein bL32 family.

The chain is Large ribosomal subunit protein bL32 from Caldicellulosiruptor saccharolyticus (strain ATCC 43494 / DSM 8903 / Tp8T 6331).